The chain runs to 354 residues: Quinone-reactive Ni/Fe-hydrogenase small chain (354 aa).

Residues 1-36 constitute a signal peptide (tat-type signal); sequence MLEEKGIERRDFMKWAGAMTAMLSLPATFTPLTAKA. [4Fe-4S] cluster is bound by residues Cys53, Cys56, Cys153, Cys186, His224, Cys227, Cys252, and Cys258. [3Fe-4S] cluster-binding residues include Cys267, Cys286, and Cys289.

The protein belongs to the [NiFe]/[NiFeSe] hydrogenase small subunit family. In terms of assembly, heterodimer of a large and a small subunit. The cofactor is [4Fe-4S] cluster. [3Fe-4S] cluster serves as cofactor. Predicted to be exported by the Tat system. The position of the signal peptide cleavage has been experimentally proven.

It is found in the cell membrane. The catalysed reaction is H2 + a menaquinone = a menaquinol. In Wolinella succinogenes (strain ATCC 29543 / DSM 1740 / CCUG 13145 / JCM 31913 / LMG 7466 / NCTC 11488 / FDC 602W) (Vibrio succinogenes), this protein is Quinone-reactive Ni/Fe-hydrogenase small chain (hydA).